The primary structure comprises 35 residues: Turgencin-B (35 aa).

Methionine 5 and methionine 9 each carry methionine sulfoxide. 3 cysteine pairs are disulfide-bonded: cysteine 7/cysteine 31, cysteine 11/cysteine 27, and cysteine 16/cysteine 24. Glycine 35 bears the Glycine amide mark.

Post-translationally, oxidation likely reduces antimicrobial activity against Gram-positive bacteria and Gram-negative bacteria.

The protein resides in the secreted. Functionally, has antimicrobial activity against Gram-positive bacteria (C.glutamicum ATCC 13032 (MIC=1.6 uM) and B.subtilis ATCC 23857 (MIC=1.6 uM)) and Gram-negative bacteria (E.coli ATCC 25922 (MIC=12.5 uM) and P.aeruginosa ATCC 27853 (MIC=25.0 uM)). Displays very low activity against the Gram-positive bacteria S.aureus ATCC 9144 (MIC&gt;100 uM). This Synoicum turgens (Colonial ascidian) protein is Turgencin-B.